The following is a 156-amino-acid chain: MSNPSDGSTDPKTTFMIEEIQELLPHRYPFLLVDRIIDYKESERAVGIKNVTMNEEFFQGHFPGRPLMPGVLIVEAMAQVGGIVLAQLPDIPSGKLFVFTGIDKVRIRRSVVPGDQLVITAEFLSLKRKRFAMMSTKAEVDGKLACSGELMFAMVD.

Residue His61 is part of the active site.

It belongs to the thioester dehydratase family. FabZ subfamily.

It is found in the cytoplasm. The enzyme catalyses a (3R)-hydroxyacyl-[ACP] = a (2E)-enoyl-[ACP] + H2O. Functionally, involved in unsaturated fatty acids biosynthesis. Catalyzes the dehydration of short chain beta-hydroxyacyl-ACPs and long chain saturated and unsaturated beta-hydroxyacyl-ACPs. In Acaryochloris marina (strain MBIC 11017), this protein is 3-hydroxyacyl-[acyl-carrier-protein] dehydratase FabZ.